A 107-amino-acid polypeptide reads, in one-letter code: Small ribosomal subunit protein uS15 (107 aa).

Residue Lys-27 is modified to N6-acetyllysine; alternate. An N6-succinyllysine; alternate modification is found at Lys-27. A Glycyl lysine isopeptide (Lys-Gly) (interchain with G-Cter in ubiquitin) cross-link involves residue Lys-27. Ser-30 bears the Phosphoserine mark. N6-succinyllysine is present on Lys-34. Position 38 is a phosphotyrosine (Tyr-38). Lys-43 is covalently cross-linked (Glycyl lysine isopeptide (Lys-Gly) (interchain with G-Cter in SUMO2)).

Belongs to the universal ribosomal protein uS15 family. As to quaternary structure, component of the small ribosomal subunit. Part of the small subunit (SSU) processome, composed of more than 70 proteins and the RNA chaperone small nucleolar RNA (snoRNA) U3. In terms of processing, ubiquitinated at Lys-27 by RNF14 and RNF25 in response to ribosome collisions (ribosome stalling).

It is found in the cytoplasm. The protein resides in the nucleus. Its subcellular location is the nucleolus. Functionally, component of the small ribosomal subunit. The ribosome is a large ribonucleoprotein complex responsible for the synthesis of proteins in the cell. Part of the small subunit (SSU) processome, first precursor of the small eukaryotic ribosomal subunit. During the assembly of the SSU processome in the nucleolus, many ribosome biogenesis factors, an RNA chaperone and ribosomal proteins associate with the nascent pre-rRNA and work in concert to generate RNA folding, modifications, rearrangements and cleavage as well as targeted degradation of pre-ribosomal RNA by the RNA exosome. This is Small ribosomal subunit protein uS15 (RPS13) from Sus scrofa (Pig).